A 139-amino-acid polypeptide reads, in one-letter code: MKPAARRRARECAVQALYSWQLSHNDIADIEVQFLAEQDTSDVDVAYFRDLYAGAATNAQELDKLMAPYLSRQLEELGHVERAVLRIALFELSKRQDVPYKVAINEAIELAKTFGAEESHKFINGVLDKVAPQIRPNRK.

It belongs to the NusB family.

In terms of biological role, involved in transcription antitermination. Required for transcription of ribosomal RNA (rRNA) genes. Binds specifically to the boxA antiterminator sequence of the ribosomal RNA (rrn) operons. The chain is Transcription antitermination protein NusB from Sodalis glossinidius (strain morsitans).